A 160-amino-acid polypeptide reads, in one-letter code: SsrA-binding protein (160 aa).

It belongs to the SmpB family.

The protein resides in the cytoplasm. Required for rescue of stalled ribosomes mediated by trans-translation. Binds to transfer-messenger RNA (tmRNA), required for stable association of tmRNA with ribosomes. tmRNA and SmpB together mimic tRNA shape, replacing the anticodon stem-loop with SmpB. tmRNA is encoded by the ssrA gene; the 2 termini fold to resemble tRNA(Ala) and it encodes a 'tag peptide', a short internal open reading frame. During trans-translation Ala-aminoacylated tmRNA acts like a tRNA, entering the A-site of stalled ribosomes, displacing the stalled mRNA. The ribosome then switches to translate the ORF on the tmRNA; the nascent peptide is terminated with the 'tag peptide' encoded by the tmRNA and targeted for degradation. The ribosome is freed to recommence translation, which seems to be the essential function of trans-translation. This is SsrA-binding protein from Klebsiella pneumoniae (strain 342).